The sequence spans 319 residues: MTMPPLTLYLAAPRGFCAGVDRAIKIVEMALEKWGAPVYVRHEIVHNKFVVDRLRDMGAVFVEELDEAPTDRPVIFSAHGVPKAIPAEAERRNMVYVDATCPLVSKVHLEAERHHENGLQMIMIGHAGHPETVGTMGQLPEGEVLLVETVEDVAGLEVRDPERLAYITQTTLSIDDTAAIVAALRERFPAIAIPRKEDICYATTNRQGAVKAIAGRIDALLVIGAPNSSNSKRLVEVGRAAGCRVAQLVQRATDIDWEALQGATAVGVAAGASAPEVLVDEVIAAFRARFDTTVEAVETVKERVEFKVPRILREPAETP.

[4Fe-4S] cluster is bound at residue C17. (2E)-4-hydroxy-3-methylbut-2-enyl diphosphate is bound by residues H46 and H79. 2 residues coordinate dimethylallyl diphosphate: H46 and H79. 2 residues coordinate isopentenyl diphosphate: H46 and H79. C101 provides a ligand contact to [4Fe-4S] cluster. H129 contributes to the (2E)-4-hydroxy-3-methylbut-2-enyl diphosphate binding site. Residue H129 participates in dimethylallyl diphosphate binding. H129 lines the isopentenyl diphosphate pocket. The active-site Proton donor is the E131. A (2E)-4-hydroxy-3-methylbut-2-enyl diphosphate-binding site is contributed by T170. C200 is a [4Fe-4S] cluster binding site. Positions 228, 229, 230, and 273 each coordinate (2E)-4-hydroxy-3-methylbut-2-enyl diphosphate. Residues S228, S229, N230, and S273 each contribute to the dimethylallyl diphosphate site. 4 residues coordinate isopentenyl diphosphate: S228, S229, N230, and S273.

The protein belongs to the IspH family. Requires [4Fe-4S] cluster as cofactor.

It carries out the reaction isopentenyl diphosphate + 2 oxidized [2Fe-2S]-[ferredoxin] + H2O = (2E)-4-hydroxy-3-methylbut-2-enyl diphosphate + 2 reduced [2Fe-2S]-[ferredoxin] + 2 H(+). It catalyses the reaction dimethylallyl diphosphate + 2 oxidized [2Fe-2S]-[ferredoxin] + H2O = (2E)-4-hydroxy-3-methylbut-2-enyl diphosphate + 2 reduced [2Fe-2S]-[ferredoxin] + 2 H(+). It participates in isoprenoid biosynthesis; dimethylallyl diphosphate biosynthesis; dimethylallyl diphosphate from (2E)-4-hydroxy-3-methylbutenyl diphosphate: step 1/1. Its pathway is isoprenoid biosynthesis; isopentenyl diphosphate biosynthesis via DXP pathway; isopentenyl diphosphate from 1-deoxy-D-xylulose 5-phosphate: step 6/6. Functionally, catalyzes the conversion of 1-hydroxy-2-methyl-2-(E)-butenyl 4-diphosphate (HMBPP) into a mixture of isopentenyl diphosphate (IPP) and dimethylallyl diphosphate (DMAPP). Acts in the terminal step of the DOXP/MEP pathway for isoprenoid precursor biosynthesis. The chain is 4-hydroxy-3-methylbut-2-enyl diphosphate reductase from Cereibacter sphaeroides (strain ATCC 17023 / DSM 158 / JCM 6121 / CCUG 31486 / LMG 2827 / NBRC 12203 / NCIMB 8253 / ATH 2.4.1.) (Rhodobacter sphaeroides).